Here is a 274-residue protein sequence, read N- to C-terminus: 2,3,4,5-tetrahydropyridine-2,6-dicarboxylate N-succinyltransferase (274 aa).

Residues R104 and D141 each contribute to the substrate site.

Belongs to the transferase hexapeptide repeat family. As to quaternary structure, homotrimer.

The protein resides in the cytoplasm. The catalysed reaction is (S)-2,3,4,5-tetrahydrodipicolinate + succinyl-CoA + H2O = (S)-2-succinylamino-6-oxoheptanedioate + CoA. It functions in the pathway amino-acid biosynthesis; L-lysine biosynthesis via DAP pathway; LL-2,6-diaminopimelate from (S)-tetrahydrodipicolinate (succinylase route): step 1/3. The protein is 2,3,4,5-tetrahydropyridine-2,6-dicarboxylate N-succinyltransferase of Photorhabdus laumondii subsp. laumondii (strain DSM 15139 / CIP 105565 / TT01) (Photorhabdus luminescens subsp. laumondii).